The chain runs to 238 residues: MITVYGYVPAWGIPDISPYVTKVVNYLSFTGIEFEYKTQDLATLDQDSPHGKLPYIVDSDGTKVGDSNTIIEYLKNKFGDKLDADLSKQQLAQALAFHRLIEEHLYWSGIIQARWQDDAGWETYIPFIVQGAEVTPEMRVGLDAFRARILDGFNGQGMGRRSEEVVAEFFRADIDALSDFLDDKPFILGDKVHSIDASLYSTLRHIADQPQQWLGSGYVQTKPNLVDYLERIRKQYDI.

A GST N-terminal domain is found at 7–82 (YVPAWGIPDI…YLKNKFGDKL (76 aa)). The GST C-terminal domain occupies 118 to 238 (DAGWETYIPF…LERIRKQYDI (121 aa)).

It belongs to the GST superfamily. Homodimer.

It catalyses the reaction 2-glutathionyl-2-methylbut-3-en-1-ol = (3R)-3,4-epoxy-3-methylbut-1-ene + glutathione. Its activity is regulated as follows. Activity is inhibited by 1,2-epoxyhexane. Functionally, involved in isoprene degradation. Catalyzes the glutathione-dependent ring opening of various epoxides. The highest conversion rate is observed with the physiological substrate, 3,4-epoxy-3-methyl-1-butene, which is the primary oxidation product of isoprene. It can also use other epoxides, including epoxyethane, epoxypropane, epithiopropane, epichlorohydrin, epifluorohydrin, epibromohydrin, 1,2-epoxybutane, 1,2-epoxyhexane, cis-2,3-epoxybutane, cis-1,2-dichloroepoxyethane and trans-1,2-dichloroepoxyethane. The protein is Isoprene-epoxide--glutathione S-transferase of Rhodococcus sp. (strain AD45).